The chain runs to 419 residues: Glutamyl-tRNA reductase (419 aa).

Residues 50 to 53, serine 108, 113 to 115, and glutamine 119 each bind substrate; these read TCNR and ETQ. Catalysis depends on cysteine 51, which acts as the Nucleophile. 188–193 lines the NADP(+) pocket; it reads GAGEMI.

The protein belongs to the glutamyl-tRNA reductase family. In terms of assembly, homodimer.

It catalyses the reaction (S)-4-amino-5-oxopentanoate + tRNA(Glu) + NADP(+) = L-glutamyl-tRNA(Glu) + NADPH + H(+). It functions in the pathway porphyrin-containing compound metabolism; protoporphyrin-IX biosynthesis; 5-aminolevulinate from L-glutamyl-tRNA(Glu): step 1/2. In terms of biological role, catalyzes the NADPH-dependent reduction of glutamyl-tRNA(Glu) to glutamate 1-semialdehyde (GSA). The chain is Glutamyl-tRNA reductase from Albidiferax ferrireducens (strain ATCC BAA-621 / DSM 15236 / T118) (Rhodoferax ferrireducens).